Here is a 352-residue protein sequence, read N- to C-terminus: Maleylacetate reductase (352 aa).

This sequence belongs to the iron-containing alcohol dehydrogenase family.

The catalysed reaction is 3-oxoadipate + NAD(+) = maleylacetate + NADH + H(+). The enzyme catalyses 3-oxoadipate + NADP(+) = maleylacetate + NADPH + H(+). It participates in aromatic compound metabolism; 3-chlorocatechol degradation. This chain is Maleylacetate reductase (clcE), found in Pseudomonas aeruginosa.